The following is a 407-amino-acid chain: Lysophospholipid transporter LplT (407 aa).

11 helical membrane passes run 18 to 38, 53 to 73, 91 to 111, 139 to 159, 163 to 183, 229 to 249, 257 to 277, 286 to 306, 310 to 330, 343 to 365, and 375 to 395; these read AVII…FATL, FLQM…GQIA, AGAL…LVGV, LMEA…GVLA, IYGA…ANML, WGAG…ALGI, LLNA…AKLV, LPAG…HNLM, SLLI…NALL, AIAV…YSLV, and IGIG…VWLI.

The protein belongs to the major facilitator superfamily. LplT (TC 2.A.1.42) family.

Its subcellular location is the cell inner membrane. In terms of biological role, catalyzes the facilitated diffusion of 2-acyl-glycero-3-phosphoethanolamine (2-acyl-GPE) into the cell. This Pectobacterium carotovorum subsp. carotovorum (strain PC1) protein is Lysophospholipid transporter LplT.